The primary structure comprises 109 residues: ATP-dependent Clp protease adapter protein ClpS (109 aa).

This sequence belongs to the ClpS family. Binds to the N-terminal domain of the chaperone ClpA.

Its function is as follows. Involved in the modulation of the specificity of the ClpAP-mediated ATP-dependent protein degradation. This Lawsonia intracellularis (strain PHE/MN1-00) protein is ATP-dependent Clp protease adapter protein ClpS.